Here is a 1987-residue protein sequence, read N- to C-terminus: Transcription factor 20 (1987 aa).

Positions 1-22 (MQSFREQSSYHGNQQSYPQEVH) are enriched in polar residues. 5 disordered regions span residues 1–79 (MQSF…QGYQ), 96–432 (DTVA…GNVP), 446–481 (LSPT…DPGL), 502–816 (LLSD…GTAR), and 844–891 (PHWG…SLSE). Residues 51-74 (TGSSSSGRRGTAAAAAAMASETSG) show a composition bias toward low complexity. Arginine 59 is subject to Omega-N-methylarginine. Residues 121–142 (QGSSFGNQYASEGHVSQFQAQH) show a composition bias toward polar residues. The segment covering 163 to 205 (SAQYQQQASSQQQQQQQQQQQQQQQQQQQQVQQLRQQLYQSHQ) has biased composition (low complexity). The span at 206–235 (PLPQTTGQPASGSSHLQPMQRPSTLPSSAG) shows a compositional bias: polar residues. The span at 248–277 (QSSASSSSSSSFPSPQRFSQSGQSYDGSYS) shows a compositional bias: low complexity. Residues 289–311 (VGSNAQAYGTQSNYSYQPQSMKN) show a composition bias toward polar residues. A Glycyl lysine isopeptide (Lys-Gly) (interchain with G-Cter in SUMO2) cross-link involves residue lysine 316. The segment covering 322-354 (QQGQQQQQQQPQPQQQQPQQQQQQQQQQQHPPQ) has biased composition (low complexity). Polar residues predominate over residues 357 to 377 (MQYTNAATKMPLQSQVGQYNQ). Residues 396 to 416 (SNPSPAASVVQSPSCSSTPSP) show a composition bias toward low complexity. A compositionally biased stretch (polar residues) spans 417–432 (LMQSGENLQCGQGNVP). Low complexity predominate over residues 446-456 (LSPTPSMMPSP). Phosphoserine occurs at positions 447 and 458. Composition is skewed to polar residues over residues 526–537 (SCTNSEGSSQPE), 566–576 (LSGQSTSSDTT), and 585–605 (AGSS…TSPA). Phosphoserine occurs at positions 567, 588, 603, and 612. Residues 618–627 (TSLSSEGNTK) are compositionally biased toward polar residues. Position 631 is an N6-acetyllysine (lysine 631). Residues 645-657 (RVEKSGGQDKGSQ) are compositionally biased toward basic and acidic residues. Positions 666 to 682 (RPPSNSGVKEISHTSLP) are enriched in polar residues. A Phosphoserine modification is found at serine 669. Positions 693-715 (GNKNGDNNSSNHNGEGNGPSSHS) are enriched in low complexity. Positions 722–731 (TGRTEPSKSP) are enriched in polar residues. Residues lysine 739, lysine 762, lysine 777, lysine 852, lysine 861, and lysine 873 each participate in a glycyl lysine isopeptide (Lys-Gly) (interchain with G-Cter in SUMO2) cross-link. Over residues 761–777 (EKGDFGSHGERKGRNEK) the composition is skewed to basic and acidic residues. A Phosphoserine modification is found at serine 900. Glycyl lysine isopeptide (Lys-Gly) (interchain with G-Cter in SUMO2) cross-links involve residues lysine 949 and lysine 951. The interval 949 to 1065 (KLKSQSGQIK…GDPHHMNPHM (117 aa)) is disordered. Residue lysine 958 forms a Glycyl lysine isopeptide (Lys-Gly) (interchain with G-Cter in SUMO1); alternate linkage. A Glycyl lysine isopeptide (Lys-Gly) (interchain with G-Cter in SUMO2); alternate cross-link involves residue lysine 958. Over residues 974 to 989 (KSGDHCHPTSIKHETY) the composition is skewed to basic and acidic residues. A Glycyl lysine isopeptide (Lys-Gly) (interchain with G-Cter in SUMO2) cross-link involves residue lysine 985. Residues serine 994 and serine 1033 each carry the phosphoserine modification. Residue lysine 1043 forms a Glycyl lysine isopeptide (Lys-Gly) (interchain with G-Cter in SUMO2) linkage. Arginine 1052 carries the post-translational modification Omega-N-methylarginine. Residue serine 1081 is modified to Phosphoserine. Glycyl lysine isopeptide (Lys-Gly) (interchain with G-Cter in SUMO2) cross-links involve residues lysine 1114, lysine 1126, lysine 1165, lysine 1201, lysine 1206, lysine 1211, lysine 1238, lysine 1259, lysine 1295, and lysine 1302. Residues 1136–1372 (VIAAAQHRQE…SPAKTKILPP (237 aa)) form a disordered region. Positions 1158-1170 (DRVRSPLKNDKDG) are enriched in basic and acidic residues. The segment at 1198-1219 (LPAKSMELKHSSQKLQESCWDL) is leucine-zipper. A Nuclear localization signal motif is present at residues 1282–1295 (RRRVRSFISPIPSK). Basic and acidic residues-rich tracts occupy residues 1305 to 1321 (NADD…EGAD) and 1332 to 1346 (HSQD…DSSK). Residue serine 1333 is modified to Phosphoserine. A Glycyl lysine isopeptide (Lys-Gly) (interchain with G-Cter in SUMO2) cross-link involves residue lysine 1337. Position 1363 is a phosphoserine (serine 1363). Residue lysine 1366 forms a Glycyl lysine isopeptide (Lys-Gly) (interchain with G-Cter in SUMO2) linkage. Serine 1389 carries the phosphoserine modification. A disordered region spans residues 1415 to 1434 (SLKSGPPEGGTVATQEAEME). Glycyl lysine isopeptide (Lys-Gly) (interchain with G-Cter in SUMO2) cross-links involve residues lysine 1417, lysine 1437, lysine 1456, and lysine 1474. Positions 1446 to 1636 (SVTNQESNVE…KQAVPIVEPQ (191 aa)) are disordered. Residues 1463–1479 (EEWRGSGDDKVKTEAHV) show a composition bias toward basic and acidic residues. Over residues 1481 to 1501 (TASTGKEPSGTMTSTASQKPG) the composition is skewed to polar residues. A Glycyl lysine isopeptide (Lys-Gly) (interchain with G-Cter in SUMO2) cross-link involves residue lysine 1538. Serine 1550 carries the phosphoserine modification. Lysine 1552 participates in a covalent cross-link: Glycyl lysine isopeptide (Lys-Gly) (interchain with G-Cter in SUMO2). A DNA-binding region (a.T hook) is located at residues 1565–1579 (GKKKGRPIGSVNKQK). The segment covering 1584 to 1594 (QPPPPPQPPQM) has biased composition (pro residues). A Nuclear localization signal motif is present at residues 1604-1628 (KPKKQRQRRERRKPGAQPRKRKTKQ). Residues 1606–1627 (KKQRQRRERRKPGAQPRKRKTK) show a composition bias toward basic residues. Lysine 1641 is covalently cross-linked (Glycyl lysine isopeptide (Lys-Gly) (interchain with G-Cter in SUMO2)). 2 disordered regions span residues 1685 to 1710 (QTKL…SKVL) and 1760 to 1865 (TLPK…GPEL). Phosphoserine is present on serine 1697. Phosphothreonine is present on residues threonine 1699, threonine 1790, and threonine 1792. A Nuclear localization signal motif is present at residues 1812–1819 (RFKRRHRS). The span at 1850 to 1859 (DTKPSVPTTS) shows a compositional bias: polar residues. The segment at 1856-1892 (PTTSEGGPELELQIPELPLDSNEFWVHEGCILWANGI) adopts a C2HC pre-PHD-type; degenerate zinc-finger fold. A PHD-type zinc finger spans residues 1912-1960 (MKCSHCQEAGATLGCYNKGCSFRYHYPCAIDADCLLHEENFSVRCPKHK). A disordered region spans residues 1966–1987 (PLPPLQNKTAKGSLSTEQSERG). The segment covering 1971 to 1987 (QNKTAKGSLSTEQSERG) has biased composition (polar residues).

As to quaternary structure, homodimer. Interacts with RNF4 and JUN. Binds to the regulatory region of MMP3. Expressed in brain, lung, liver, kidney and testes.

Its subcellular location is the nucleus. Its function is as follows. Transcriptional activator that binds to the regulatory region of MMP3 and thereby controls stromelysin expression. It stimulates the activity of various transcriptional activators such as JUN, SP1, PAX6 and ETS1, suggesting a function as a coactivator. In Mus musculus (Mouse), this protein is Transcription factor 20 (Tcf20).